Here is a 750-residue protein sequence, read N- to C-terminus: Cation-transporting P-type ATPase B (750 aa).

The region spanning 17-80 (RRIQLDVAGM…VIEQAGYRAT (64 aa)) is the HMA domain. A metal cation contacts are provided by Cys-28 and Cys-31. Helical transmembrane passes span 104-124 (LIVAALLFVPLADLSTMFAIV), 129-149 (FPGWGYLLTALAAPIVTWAAW), 167-187 (ETLISAGILAATGWSLSTIFV), 200-220 (AILHSDSIYFEVAAGVTVFVL), 360-380 (IAAVFVPMVFVIAGLAGASWL), and 389-409 (AFSVVLGVLVIACPCTLGLAT). Asp-445 (4-aspartylphosphate intermediate) is an active-site residue. A run of 6 helical transmembrane segments spans residues 471–491 (VLALASAVEAASEHSVATAIV), 500–520 (VADFVAFAGCGVSGVVAEHHV), 547–567 (SRGETVVFVSVDGVACGAVAI), 663–683 (VAIGAADLILVRDSLGVVPVA), 693–713 (TIRINMIWAFGYNVAAIPIAS), and 715–735 (GLLNPLIAGAAMAFSSFFVVS).

The protein belongs to the cation transport ATPase (P-type) (TC 3.A.3) family. Type IB subfamily.

It is found in the cell membrane. The catalysed reaction is ATP + H2O = ADP + phosphate + H(+). The chain is Cation-transporting P-type ATPase B (ctpB) from Mycobacterium leprae (strain TN).